Consider the following 209-residue polypeptide: MAKLYFYYSAMNAGKTTTLLQSAHNYRERGMRTSILTPKLDHRAGSGVVASRIGLRADGQTFDRQTELLQLIERDIAAHGPLHCVLVDEAQFLSSAQVWQLSEVVDRLRIPVLCYGLRTDFRGELFEGSQFLLAWADELEEIKTICHSGSKATMTVRVDAQGHAVQDGPQVEIGGNERYVSVSRAEFKKIMRGEGRIDPLQIALPLPPA.

Residues 9–16 and 88–91 each bind ATP; these read SAMNAGKT and DEAQ. Residue glutamate 89 is the Proton acceptor of the active site.

The protein belongs to the thymidine kinase family. In terms of assembly, homotetramer.

The protein localises to the cytoplasm. It carries out the reaction thymidine + ATP = dTMP + ADP + H(+). The polypeptide is Thymidine kinase (Xanthomonas campestris pv. campestris (strain 8004)).